The following is a 540-amino-acid chain: Pentatricopeptide repeat-containing protein At1g14470 (540 aa).

PPR repeat units lie at residues 70 to 104 (NVFV…GIMP), 105 to 134 (DAFS…GFFK), 135 to 165 (DPYV…ISQR), 166 to 196 (KGSD…MPEN), 197 to 227 (DVVS…MPEK), 228 to 262 (SVVS…GVRP), 263 to 297 (NETT…RVRL), 298 to 328 (NCFV…LGTQ), 330 to 364 (NLVT…NVVS), 365 to 395 (WNSL…GDSK), 397 to 431 (DEVT…QIKL), 432 to 462 (NDSG…MKER), 463 to 497 (DVVS…GIEP), and 498 to 528 (DRVT…IRNP).

Belongs to the PPR family. PCMP-A subfamily.

This chain is Pentatricopeptide repeat-containing protein At1g14470 (PCMP-A4), found in Arabidopsis thaliana (Mouse-ear cress).